The sequence spans 137 residues: TSC22 domain family protein 3 (137 aa).

Residues 1–60 (MNTEMYQTPMEVAVYQLHNFSISFFSSLLGGDVVSVKLDNSASGASVVALDNKIEQAMDL) are AP1-binding. N40 and V73 each carry phosphoserine. The segment at 76–97 (LKEQIRELLEKNSQLERENTLL) is leucine-zipper. The tract at residues 101-137 (ASPEQLEKFQSRLSPEEPAPEAPETPETPEAPGGSAV) is disordered. S102 carries the post-translational modification Phosphoserine. Residues T125 and T128 each carry the phosphothreonine modification. The segment covering 128–137 (TPEAPGGSAV) has biased composition (low complexity).

It belongs to the TSC-22/Dip/Bun family. As to quaternary structure, can form homodimers, however it is likely to function as a monomer. Interacts with NFKB1. Interacts (via N-terminus) with JUN and FOS; these interactions inhibit the binding of active AP1 to its target DNA. In terms of assembly, interacts with MYOD1. Interacts with HDAC1; this interaction affects HDAC1 activity on MYOG promoter and thus inhibits MYOD1 transcriptional activity. Interacts with MYOD1. In terms of tissue distribution, expressed in T-cells. Expression inversely correlates with T-cell activation, being higher in resting cells and lower in cells activated by TCR/CD3 triggering (at protein level). Constitutively expressed in lung, intestine, kidney and liver, most probably by resident cells from the macrophage lineage. Expressed in thymus, lymph nodes, bone marrow, spleen, lung and skeletal muscle. Expressed in spleen and skeletal muscle (at protein level). Expressed in the cortex, medulla and papilla of the kidney. As to expression, expressed in the cortex, medulla and papilla of the kidney. In terms of tissue distribution, expressed in spleen and skeletal muscle (at protein level).

Its subcellular location is the cytoplasm. It is found in the nucleus. In terms of biological role, protects T-cells from IL2 deprivation-induced apoptosis through the inhibition of FOXO3A transcriptional activity that leads to the down-regulation of the pro-apoptotic factor BCL2L11. In macrophages, plays a role in the anti-inflammatory and immunosuppressive effects of glucocorticoids and IL10. In T-cells, inhibits anti-CD3-induced NFKB1 nuclear translocation and thereby NFKB1 DNA-binding activities. In vitro, suppresses AP-1 transcription factor complex DNA-binding activities. Functionally, inhibits myogenic differentiation and mediates anti-myogenic effects of glucocorticoids by binding and regulating MYOD1 and HDAC1 transcriptional activity resulting in reduced expression of MYOG. The polypeptide is TSC22 domain family protein 3 (Mus musculus (Mouse)).